A 175-amino-acid polypeptide reads, in one-letter code: Large ribosomal subunit protein uL10 (175 aa).

This sequence belongs to the universal ribosomal protein uL10 family. Part of the ribosomal stalk of the 50S ribosomal subunit. The N-terminus interacts with L11 and the large rRNA to form the base of the stalk. The C-terminus forms an elongated spine to which L12 dimers bind in a sequential fashion forming a multimeric L10(L12)X complex.

Functionally, forms part of the ribosomal stalk, playing a central role in the interaction of the ribosome with GTP-bound translation factors. This is Large ribosomal subunit protein uL10 from Psychrobacter cryohalolentis (strain ATCC BAA-1226 / DSM 17306 / VKM B-2378 / K5).